Consider the following 106-residue polypeptide: Iron-sulfur cluster assembly protein CyaY (106 aa).

The protein belongs to the frataxin family.

Involved in iron-sulfur (Fe-S) cluster assembly. May act as a regulator of Fe-S biogenesis. This chain is Iron-sulfur cluster assembly protein CyaY, found in Yersinia enterocolitica serotype O:8 / biotype 1B (strain NCTC 13174 / 8081).